The primary structure comprises 359 residues: MTKLPKLSSNSSLLGLSSEDLEEFARQEGEKSFRGRQIHEWIYQRGAKSLDSISVLPKKWRDSLVRKGIQIGRLDEINRVVAEDETLKLLMGTFDGEIVETVGIPTDKRLTVCVSSQIGCPMGCKFCATGKGGLNRSLDVNEIVDQVISVRETMNRRPTHVVFMGMGEPLLNIRNVLDSIECLTSDIGIGQRKITVSTVGIPNTLSDLAKLAQDRLGRVKFTLAVSLHAPNQTLRELIIPSASSYPINSLLKDCKKYIELTGRRVSFEYILLGGLNDKDIHAEQLANLMRGFQSHVNLIAYNPIAEENFKRPSQSRVNAFRELLENRGVAVSVRASRGRDKDAACGQLRRQTIDKIKIN.

Residue Glu-100 is the Proton acceptor of the active site. Residues 106-340 (TDKRLTVCVS…VSVRASRGRD (235 aa)) form the Radical SAM core domain. Cysteines 113 and 345 form a disulfide. 3 residues coordinate [4Fe-4S] cluster: Cys-120, Cys-124, and Cys-127. S-adenosyl-L-methionine is bound by residues 167-168 (GE), Ser-197, 226-228 (SLH), and Asn-302. The active-site S-methylcysteine intermediate is Cys-345.

This sequence belongs to the radical SAM superfamily. RlmN family. [4Fe-4S] cluster serves as cofactor.

The protein resides in the cytoplasm. The catalysed reaction is adenosine(2503) in 23S rRNA + 2 reduced [2Fe-2S]-[ferredoxin] + 2 S-adenosyl-L-methionine = 2-methyladenosine(2503) in 23S rRNA + 5'-deoxyadenosine + L-methionine + 2 oxidized [2Fe-2S]-[ferredoxin] + S-adenosyl-L-homocysteine. The enzyme catalyses adenosine(37) in tRNA + 2 reduced [2Fe-2S]-[ferredoxin] + 2 S-adenosyl-L-methionine = 2-methyladenosine(37) in tRNA + 5'-deoxyadenosine + L-methionine + 2 oxidized [2Fe-2S]-[ferredoxin] + S-adenosyl-L-homocysteine. In terms of biological role, specifically methylates position 2 of adenine 2503 in 23S rRNA and position 2 of adenine 37 in tRNAs. This is Probable dual-specificity RNA methyltransferase RlmN from Prochlorococcus marinus (strain NATL2A).